Reading from the N-terminus, the 117-residue chain is Large ribosomal subunit protein bL19 (117 aa).

The protein belongs to the bacterial ribosomal protein bL19 family.

Functionally, this protein is located at the 30S-50S ribosomal subunit interface and may play a role in the structure and function of the aminoacyl-tRNA binding site. This chain is Large ribosomal subunit protein bL19, found in Christiangramia forsetii (strain DSM 17595 / CGMCC 1.15422 / KT0803) (Gramella forsetii).